We begin with the raw amino-acid sequence, 360 residues long: 4-hydroxy-3-methylbut-2-en-1-yl diphosphate synthase (flavodoxin) (360 aa).

Cysteine 265, cysteine 268, cysteine 300, and glutamate 307 together coordinate [4Fe-4S] cluster.

The protein belongs to the IspG family. [4Fe-4S] cluster serves as cofactor.

The enzyme catalyses (2E)-4-hydroxy-3-methylbut-2-enyl diphosphate + oxidized [flavodoxin] + H2O + 2 H(+) = 2-C-methyl-D-erythritol 2,4-cyclic diphosphate + reduced [flavodoxin]. It functions in the pathway isoprenoid biosynthesis; isopentenyl diphosphate biosynthesis via DXP pathway; isopentenyl diphosphate from 1-deoxy-D-xylulose 5-phosphate: step 5/6. Its function is as follows. Converts 2C-methyl-D-erythritol 2,4-cyclodiphosphate (ME-2,4cPP) into 1-hydroxy-2-methyl-2-(E)-butenyl 4-diphosphate. The sequence is that of 4-hydroxy-3-methylbut-2-en-1-yl diphosphate synthase (flavodoxin) from Brevibacillus brevis (strain 47 / JCM 6285 / NBRC 100599).